Consider the following 359-residue polypeptide: Phospho-N-acetylmuramoyl-pentapeptide-transferase (359 aa).

Helical transmembrane passes span 3 to 23, 55 to 75, 80 to 100, 117 to 137, 156 to 176, 187 to 207, 231 to 251, 255 to 275, 280 to 300, and 334 to 354; these read QILIAVAIALTVSILLTPALI, VAIIAGIWAGYLGTHLAGLAF, ISASGLLVLSLATVLGIVGFL, TAKTIGQVAAAVLFGVLALGF, IATVTLAPGLFVLFCVVVVSA, LDGLAAGSMAMVTAAYVLITF, LAIVAAATAGACIGFLWWNAA, IFMGDTGSLALGGIIAGISVT, ILAVVLGSLFVAEVSSVVLQI, and FWLLTAIACGLGVALFYGEWL.

The protein belongs to the glycosyltransferase 4 family. MraY subfamily. It depends on Mg(2+) as a cofactor.

It localises to the cell membrane. It carries out the reaction UDP-N-acetyl-alpha-D-muramoyl-L-alanyl-gamma-D-glutamyl-meso-2,6-diaminopimeloyl-D-alanyl-D-alanine + di-trans,octa-cis-undecaprenyl phosphate = di-trans,octa-cis-undecaprenyl diphospho-N-acetyl-alpha-D-muramoyl-L-alanyl-D-glutamyl-meso-2,6-diaminopimeloyl-D-alanyl-D-alanine + UMP. Its pathway is cell wall biogenesis; peptidoglycan biosynthesis. In terms of biological role, catalyzes the initial step of the lipid cycle reactions in the biosynthesis of the cell wall peptidoglycan: transfers peptidoglycan precursor phospho-MurNAc-pentapeptide from UDP-MurNAc-pentapeptide onto the lipid carrier undecaprenyl phosphate, yielding undecaprenyl-pyrophosphoryl-MurNAc-pentapeptide, known as lipid I. This Mycobacterium avium (strain 104) protein is Phospho-N-acetylmuramoyl-pentapeptide-transferase.